The chain runs to 542 residues: Aspartate kinase FUB3 (542 aa).

ACT domains lie at isoleucine 404 to aspartate 472 and leucine 478 to isoleucine 542.

It belongs to the aspartokinase family.

It catalyses the reaction L-aspartate + ATP = 4-phospho-L-aspartate + ADP. Its pathway is mycotoxin biosynthesis. In terms of biological role, aspartate kinase; part of the gene cluster that mediates the biosynthesis of fusaric acid, a mycotoxin with low to moderate toxicity to animals and humans, but with high phytotoxic properties. L-aspartate is suggested as fusaric acid amino acid precursor that is activated and further processed to O-acetyl-L-homoserine by cluster enzymes aspartate kinase FUB3 and homoserine O-acetyltransferase FUB5, as well as enzymes of the primary metabolism. The polyketide synthase (PKS) FUB1 generates the triketide trans-2-hexenal which is presumptively released by the hydrolase FUB4 and linked to the NRPS-bound amino acid precursor by NAD(P)-dependent dehydrogenase FUB6. FUB1, FUB4, and the non-canonical NRPS Fub8 may form an enzyme complex. Further processing of the NRPS-bound intermediate might be carried out by FUB6 and the sulfhydrylase FUB7, enabling a spontaneous electrocyclization to close the carbon backbone of fusaric acid. Dihydrofusaric acid is likely to be released via reduction by the thioester reductase (TR) domain of FUB8 whereupon the final oxidation to fusaric acid may (also) be performed by the FMN-dependent dehydrogenase FUB9. The protein is Aspartate kinase FUB3 of Fusarium oxysporum f. sp. lycopersici (strain 4287 / CBS 123668 / FGSC 9935 / NRRL 34936) (Fusarium vascular wilt of tomato).